A 267-amino-acid chain; its full sequence is Glucosamine-6-phosphate deaminase (267 aa).

Catalysis depends on Asp-72, which acts as the Proton acceptor; for enolization step. Asp-141 (for ring-opening step) is an active-site residue. The Proton acceptor; for ring-opening step role is filled by His-143. Residue Glu-148 is the For ring-opening step of the active site.

Belongs to the glucosamine/galactosamine-6-phosphate isomerase family. NagB subfamily. As to quaternary structure, homohexamer.

It carries out the reaction alpha-D-glucosamine 6-phosphate + H2O = beta-D-fructose 6-phosphate + NH4(+). Its pathway is amino-sugar metabolism; N-acetylneuraminate degradation; D-fructose 6-phosphate from N-acetylneuraminate: step 5/5. Its activity is regulated as follows. Allosterically activated by N-acetylglucosamine 6-phosphate (GlcNAc6P). In terms of biological role, catalyzes the reversible isomerization-deamination of glucosamine 6-phosphate (GlcN6P) to form fructose 6-phosphate (Fru6P) and ammonium ion. This chain is Glucosamine-6-phosphate deaminase, found in Pasteurella multocida (strain Pm70).